Reading from the N-terminus, the 264-residue chain is Type III pantothenate kinase (264 aa).

Residue 6 to 13 (DSGNSRLK) coordinates ATP. Substrate-binding positions include Y92 and 99 to 102 (GADR). D101 functions as the Proton acceptor in the catalytic mechanism. Residue T127 participates in ATP binding. Residue T177 participates in substrate binding.

This sequence belongs to the type III pantothenate kinase family. In terms of assembly, homodimer. Requires NH4(+) as cofactor. K(+) is required as a cofactor.

Its subcellular location is the cytoplasm. The enzyme catalyses (R)-pantothenate + ATP = (R)-4'-phosphopantothenate + ADP + H(+). Its pathway is cofactor biosynthesis; coenzyme A biosynthesis; CoA from (R)-pantothenate: step 1/5. Its function is as follows. Catalyzes the phosphorylation of pantothenate (Pan), the first step in CoA biosynthesis. This chain is Type III pantothenate kinase, found in Bordetella petrii (strain ATCC BAA-461 / DSM 12804 / CCUG 43448).